We begin with the raw amino-acid sequence, 126 residues long: MALWKRLTNRTNRSQGACFEQKARLFLEQQGLKFIQANQHFKCGELDLVMQQGDTIVFVEVRQRKNNRFGSALESIDYRKQQKWLDAANMWLLTEYNQSLDTANCRFDVVAFEAEQPPLWIQNFLG.

It belongs to the UPF0102 family.

The chain is UPF0102 protein HD_0802 from Haemophilus ducreyi (strain 35000HP / ATCC 700724).